We begin with the raw amino-acid sequence, 301 residues long: Porphobilinogen deaminase (301 aa).

The residue at position 242 (Cys-242) is an S-(dipyrrolylmethanemethyl)cysteine.

Belongs to the HMBS family. Monomer. It depends on dipyrromethane as a cofactor.

The enzyme catalyses 4 porphobilinogen + H2O = hydroxymethylbilane + 4 NH4(+). It functions in the pathway porphyrin-containing compound metabolism; protoporphyrin-IX biosynthesis; coproporphyrinogen-III from 5-aminolevulinate: step 2/4. In terms of biological role, tetrapolymerization of the monopyrrole PBG into the hydroxymethylbilane pre-uroporphyrinogen in several discrete steps. In Rickettsia canadensis (strain McKiel), this protein is Porphobilinogen deaminase.